A 155-amino-acid polypeptide reads, in one-letter code: Acetylaranotin biosynthesis cluster protein L (155 aa).

It functions in the pathway mycotoxin biosynthesis. Nonribosomal peptide synthetase; part of the gene cluster that mediates the biosynthesis of acetylaranotin, a member of the epipolythiodioxopiperazine (ETP) class of toxins characterized by a disulfide-bridged cyclic dipeptide. The first step of acetylaranotin biosynthesis is performed by the NRPS ataP which produces diketopiperazine cyclo-L-Phe-L-Phe via the condensation of 2 phenylalanines (L-Phe). The ataC domain of ataTC then catalyzes the formation of bishydroxylation of cyclo-L-Phe-L-Phe. The glutathione S-transferase domain ataG in ataIMG further catalyzes the conjugation of two glutathiones to the bishydroxylated intermediate. Next, the dipeptidase ataJ removes the Glu residues. The following step is performed by the carbon sulfur lyase domain ataI of ataIMG which may convert the bis-cysteinyl adduct to yield an epidithiol intermediate. The ataT domain from ataTC then catalyzes the oxidation of the free dithiols, followed by a cyclization step catalyzed by the cytochrome P450 ataF. AtaF probably acts as an epoxidase to promote a dual epoxidation formation at C8 and C9 along with C8' and C9', followed by the spontaneous nucleophilic attack of the amide nitrogens N10 and N10' to yield an intermediate with the pyrrolidine partial structure. The final steps of acetylaranotin biosynthesis involve the acetylation and ring rearrangement of an epitetrathiodiketopiperazine intermediate to produce acetylaranotin. AtaH probably catalyzes the acetylation of epitetrathiodiketopiperazine to produce a diacetate and ataY is responsible for the formation of the dihydrooxepin moiety that converts the diacetate intermediate to acetylaranotin via acetylapoaranotin. Both enzymes could function independently in the absence of the other. The specific function of ataL within the pathway has still to be determined. The acetylaranotin bis-thiomethyltransferase ataS located outside of acetylaranotin gene cluster is the main thiomethyltransferase responsible for converting acetylaranotin and its related intermediates to their methylated forms. This is Acetylaranotin biosynthesis cluster protein L from Aspergillus terreus (strain NIH 2624 / FGSC A1156).